A 479-amino-acid polypeptide reads, in one-letter code: Glycogen synthase (479 aa).

Lys15 is an ADP-alpha-D-glucose binding site.

It belongs to the glycosyltransferase 1 family. Bacterial/plant glycogen synthase subfamily.

The enzyme catalyses [(1-&gt;4)-alpha-D-glucosyl](n) + ADP-alpha-D-glucose = [(1-&gt;4)-alpha-D-glucosyl](n+1) + ADP + H(+). It participates in glycan biosynthesis; glycogen biosynthesis. In terms of biological role, synthesizes alpha-1,4-glucan chains using ADP-glucose. In Pectobacterium carotovorum subsp. carotovorum (strain PC1), this protein is Glycogen synthase.